A 135-amino-acid polypeptide reads, in one-letter code: DNA-directed RNA polymerase subunit omega (135 aa).

The tract at residues 84–106 (IAGHSSHVSPSRSSRHTGLGKSF) is disordered.

Belongs to the RNA polymerase subunit omega family. The RNAP catalytic core consists of 2 alpha, 1 beta, 1 beta' and 1 omega subunit. When a sigma factor is associated with the core the holoenzyme is formed, which can initiate transcription.

It carries out the reaction RNA(n) + a ribonucleoside 5'-triphosphate = RNA(n+1) + diphosphate. Promotes RNA polymerase assembly. Latches the N- and C-terminal regions of the beta' subunit thereby facilitating its interaction with the beta and alpha subunits. This Anaplasma phagocytophilum (strain HZ) protein is DNA-directed RNA polymerase subunit omega.